The chain runs to 319 residues: Type II methyltransferase M.RsrI (319 aa).

Basic residues predominate over residues 1–10 (MANRSHHNAG). Positions 1 to 32 (MANRSHHNAGHRAMNALRKSGQKHSSESQLGS) are disordered.

It belongs to the N(4)/N(6)-methyltransferase family.

It catalyses the reaction a 2'-deoxyadenosine in DNA + S-adenosyl-L-methionine = an N(6)-methyl-2'-deoxyadenosine in DNA + S-adenosyl-L-homocysteine + H(+). Its activity is regulated as follows. Strongly inhibited by N-ethylmaleimide, inactivated by MgCl(2) or MgSO(4). A beta subtype methylase, recognizes the double-stranded sequence 5'-GAATTC-3', methylates A-3 on both strands, and protects the DNA from cleavage by the RsrI endonuclease. The sequence is that of Type II methyltransferase M.RsrI from Cereibacter sphaeroides (Rhodobacter sphaeroides).